A 499-amino-acid chain; its full sequence is DAZ protein 1 (499 aa).

The disordered stretch occupies residues 1 to 29 (MMSPPLRYQKDQQNQQHQQNQSQQAAHQM). Residues 12-28 (QQNQQHQQNQSQQAAHQ) show a composition bias toward low complexity. The region spanning 66–144 (PNRIFVGGFP…SRKLNLGPAI (79 aa)) is the RRM domain. Positions 195–224 (FVYPPLRSQDQSRQQSEQQTTPQNSPTNLQ) are enriched in low complexity. Disordered stretches follow at residues 195-304 (FVYP…NNGG) and 406-499 (YPGN…TKNN). One can recognise a DAZ domain in the interval 214-236 (TTPQNSPTNLQHQQSPQVFFGGD). Residues 251-262 (EKSEVSPEKHES) are compositionally biased toward basic and acidic residues. Residues 263 to 279 (VSPQPLLPNQNVLNTQY) show a composition bias toward polar residues. Over residues 280–304 (SQGQQQWNSNVQQQQQQQMDSNNGG) the composition is skewed to low complexity. Positions 406–425 (YPGNFSQQHTMGNNENTFSL) are enriched in polar residues. Over residues 438 to 447 (KPSECQDKKT) the composition is skewed to basic and acidic residues. Positions 480–499 (LSPLSASLQSLAISSPTKNN) are enriched in low complexity.

It belongs to the RRM DAZ family. In terms of tissue distribution, germline specific. More strongly expressed during oogenesis than during spermatogenesis. During the larval stages, it is more abundant at the distal region than the proximal region of the gonad. In young adult hermaphrodites, it is expressed at a very low level in the distal mitotic region of the gonad, and begins to accumulate in the meiotic transition zone. Highly expressed in the proximal pachytene region. Not expressed in mature oocytes. Not expressed in the spermatheca. Weakly or not expressed in the germline of adult males.

In terms of biological role, RNA-binding protein that plays a central role in oogenesis, but not for spermatogenesis. Required for meiotic entry and germline differentiation, at the pachytene stage of meiosis I of female germline regardless of the sex of the soma. May act by regulating translation of specific mRNAs, possibly by binding to their 3'-UTR. This is DAZ protein 1 (daz-1) from Caenorhabditis elegans.